Here is an 821-residue protein sequence, read N- to C-terminus: MAEKRKYEPLKIEKKWQEIWDKNEEFEPKDDLSLPKKYILSMFPYPSGRIHMGHVRNYSIGDALARSYRKSGYNVLHPIGFDSFGMPAENAAIKHKIHPKIWTYENIDYMKKELASLGFSFSKKRILATSDPLYTKWEQSFFIKMFEKGLVYRKNAIVNWCEYDQTVLANEQVEDGKCWRCGNDVVQKELPGYYFNITKYASELLDDLKLLEGKWPNQVITMQENWIGRSYGLEFKFSLDEASKETLGGKFDGFEVFTTRPDTIYGVSYTALAPEHPIVKALLESDKFDENKKAKIKAILNQSPRERQASDKDGEFLGIYVVHPLTNEKIPVWVANFILADYGSGAIMAVPAHDQRDFEFASKFNLPIKPVVKPLEGESEGSKAYSEYGVAINSELINGLSSEDAKSFIIEKFEKDGLGKRITNYKLRDWGISRQRYWGAPIPVVHCKCCGVVPEKEENLPIALPEDVEITGEGNPLDKHPTWKFTKCPKCGKDAIRETDTMDTFVESSWYFARFASDEKTWEQKALDEKSVNYWMNVDQYIGGIEHAILHLLYARFFQKVLRDLGYLRDDEPFENLLTQGMVLKDGKKMSKSKGNVVDPDDIINRYGADTARLFILFAAPPQKELEWNDSAVEGAFRFLNRLWEKSQTIKKIDKLPEIDHESLNKDEKFARLKIYEALKKSTEVFGDTFAFNTLIAACMEALNAINAQDNDDVNAEGFFIILNLLEPIVPHIANELSEELFGRKNFTKIAVKEEVFVKDSIALAVTVNGKKRAEFEVTASENESEILKQAKQNVAKWLEGKEILKEIYIKGKLVNFVIKG.

The 'HIGH' region motif lies at 44-54 (PYPSGRIHMGH). The 'KMSKS' region motif lies at 589–593 (KMSKS). Lys-592 is an ATP binding site.

Belongs to the class-I aminoacyl-tRNA synthetase family.

The protein localises to the cytoplasm. The catalysed reaction is tRNA(Leu) + L-leucine + ATP = L-leucyl-tRNA(Leu) + AMP + diphosphate. This chain is Leucine--tRNA ligase, found in Campylobacter concisus (strain 13826).